The following is a 394-amino-acid chain: Potassium channel subfamily K member 3 (394 aa).

At 1-8 (MKRQNVRT) the chain is on the cytoplasmic side. The helical transmembrane segment at 9 to 29 (LALIVCTFTYLLVGAAVFDAL) threads the bilayer. N-linked (GlcNAc...) asparagine glycosylation is present at N53. The segment at residues 78–101 (WRFAGSFYFAITVITTIGYGHAAP) is an intramembrane region (pore-forming). K(+)-binding residues include T93, I94, G95, and Y96. Residues 93 to 98 (TIGYGH) are selectivity filter 1. Residues 108 to 128 (VFCMFYALLGIPLTLVMFQSL) traverse the membrane as a helical segment. Over 129–158 (GERINTLVRYLLHRAKKGLGMRRADVSMAN) the chain is Cytoplasmic. Residues 159 to 179 (MVLIGFFSCISTLCIGAAAFS) form a helical membrane-spanning segment. Residues 184–207 (WTFFQAYYYCFITLTTIGFGDYVA) constitute an intramembrane region (pore-forming). Residues T199, I200, G201, and F202 each coordinate K(+). Residues 199–204 (TIGFGD) form a selectivity filter 2 region. The helical transmembrane segment at 223 to 243 (FSFVYILTGLTVIGAFLNLVV) threads the bilayer. An X-gate region spans residues 243–248 (VLRFMT). The Cytoplasmic portion of the chain corresponds to 244-394 (LRFMTMNAED…RGLMKRRSSV (151 aa)). Disordered regions lie at residues 266–286 (RNGQAGGGGGGGSAHTTDTAS) and 338–357 (TCVEQSHSSPGGGGRYSDTP). Gly residues predominate over residues 269 to 278 (QAGGGGGGGS).

It belongs to the two pore domain potassium channel (TC 1.A.1.8) family. As to quaternary structure, homodimer. Heterodimer with KCNK1. Heterodimer with KCNK9. As to expression, widespread expression in adult. Strongest expression in pancreas and placenta. Lower expression in brain, lung, prostate, heart, kidney, uterus, small intestine and colon.

The protein localises to the cell membrane. It catalyses the reaction K(+)(in) = K(+)(out). It carries out the reaction Na(+)(in) = Na(+)(out). With respect to regulation, inhibited by external acidification, diacylglycerol and anandamide. Activated by halothane and isoflurane. Functionally, k(+) channel that conducts voltage-dependent outward rectifying currents upon membrane depolarization. Voltage sensing is coupled to K(+) electrochemical gradient in an 'ion flux gating' mode where outward but not inward ion flow opens the gate. Changes ion selectivity and becomes permeable to Na(+) ions in response to extracellular acidification. Protonation of the pH sensor His-98 stabilizes C-type inactivation conformation likely converting the channel from outward K(+)-conducting, to inward Na(+)-conducting to nonconductive state. Homo- and heterodimerizes to form functional channels with distinct regulatory and gating properties. Allows K(+) currents with fast-gating kinetics important for the repolarization and hyperpolarization phases of action potentials. In cerebellar granule cells, heteromeric KCNK3:KCNK9 channel may hyperpolarize the resting membrane potential to limit intrinsic neuronal excitability, but once the action potential threshold is reached, it may support high-frequency action potential firing and increased neuronal excitability. Dispensable for central chemosensory respiration i.e. breathing controlled by brainstem CO2/pH, it rather conducts pH-sensitive currents and controls the firing rate of serotonergic raphe neurons involved in potentiation of the respiratory chemoreflex. Additionally, imparts chemosensitivity to type 1 cells in carotid bodies which respond to a decrease in arterial oxygen pressure or an increase in carbon dioxide pressure or pH to initiate adaptive changes in pulmonary ventilation. In adrenal gland, contributes to the maintenance of a hyperpolarized resting membrane potential of aldosterone-producing cells at zona glomerulosa and limits aldosterone release as part of a regulatory mechanism that controls arterial blood pressure and electrolyte homeostasis. In brown adipocytes, mediates K(+) efflux that counteracts norepinephrine-induced membrane depolarization, limits Ca(2+) efflux and downstream cAMP and PKA signaling, ultimately attenuating lipid oxidation and adaptive thermogenesis. This chain is Potassium channel subfamily K member 3, found in Homo sapiens (Human).